Consider the following 439-residue polypeptide: MTEKVTVIGAGLAGSEAAWQLAKRGIKVDLYEMRPKKMTPAHESGNFAELVCTNSMRSNQLSNAVGLLKEEMRQMDSLIMQAADACQVPAGGALAVDRELFSRYVTDKLTSLPEVIIHDEEITDLPSEGITVIATGPLTSDSLAEKIQDFEGAESLHFFDAAAPIIAADSIDMDIVYKKSRYDRGEAAYLNCPMTKEEYDRFANALVHAETAEIHGFENSEVFEGCMPIEVMAARGAKTLLFGPLKPVGLENPKDGKTPYAVVQLRQDNAAASMYNIVGFQTHLKYGEQKRVFQMIPGLENARFVRYGKMHRNTYMASPEVLKASYEAKKRPGLFFAGQMTGVEGYVESAGSGLVAGINAAREALGQETVEFPVTTALGSMAHYITTTDAKHFQPMNASFALIPGLEGKKIRNKRERHEKISERGLADLAAFKAEKLDD.

Position 9–14 (9–14 (GAGLAG)) interacts with FAD.

It belongs to the MnmG family. TrmFO subfamily. Requires FAD as cofactor.

The protein resides in the cytoplasm. The enzyme catalyses uridine(54) in tRNA + (6R)-5,10-methylene-5,6,7,8-tetrahydrofolate + NADH + H(+) = 5-methyluridine(54) in tRNA + (6S)-5,6,7,8-tetrahydrofolate + NAD(+). It carries out the reaction uridine(54) in tRNA + (6R)-5,10-methylene-5,6,7,8-tetrahydrofolate + NADPH + H(+) = 5-methyluridine(54) in tRNA + (6S)-5,6,7,8-tetrahydrofolate + NADP(+). Its function is as follows. Catalyzes the folate-dependent formation of 5-methyl-uridine at position 54 (M-5-U54) in all tRNAs. The polypeptide is Methylenetetrahydrofolate--tRNA-(uracil-5-)-methyltransferase TrmFO (Lactobacillus delbrueckii subsp. bulgaricus (strain ATCC BAA-365 / Lb-18)).